Here is a 530-residue protein sequence, read N- to C-terminus: MAALRRLLWPPPRVSPPLCAHQPLLGPWGRPAVTTLGLPGRPFSSREDEERAVAEAAWRRRRRWGELSVAAAAGGGLVGLVCYQLYGDPRAGSPATGRPSKSAATEPEDPPRGRGMLPIPVAAAKETVAIGRTDIEDLDLYATSRERRFRLFASIECEGQLFMTPYDFILAVTTDEPKVAKTWKSLSKQELNQMLAETPPVWKGSSKLFRNLKEKGVISYTEYLFLLCILTKPHAGFRIAFNMFDTDGNEMVDKKEFLVLQEIFRKKNEKREIKGDEEKRAMLRLQLYGYHSPTNSVLKTDAEELVSRSYWDTLRRNTSQALFSDLAERADDITSLVTDTTLLVHFFGKKGKAELNFEDFYRFMDNLQTEVLEIEFLSYSNGMNTISEEDFAHILLRYTNVENTSVFLENVRYSIPEEKGITFDEFRSFFQFLNNLEDFAIALNMYNFASRSIGQDEFKRAVYVATGLKFSPHLVNTVFKIFDVDKDDQLSYKEFIGIMKDRLHRGFRGYKTVQKYPTFKSCLKKELHSR.

The transit peptide at 1–43 (MAALRRLLWPPPRVSPPLCAHQPLLGPWGRPAVTTLGLPGRPF) directs the protein to the mitochondrion. A disordered region spans residues 92-115 (GSPATGRPSKSAATEPEDPPRGRG). An EF-hand 1 domain is found at 232 to 267 (KPHAGFRIAFNMFDTDGNEMVDKKEFLVLQEIFRKK). Residues D245, D247, N249, M251, D253, and E256 each contribute to the Ca(2+) site. The region spanning 401 to 436 (VENTSVFLENVRYSIPEEKGITFDEFRSFFQFLNNL) is the EF-hand 2; degenerate domain. The EF-hand 3 domain maps to 470 to 505 (FSPHLVNTVFKIFDVDKDDQLSYKEFIGIMKDRLHR). 5 residues coordinate Ca(2+): D483, D485, D487, Q489, and E494.

Belongs to the MICU1 family. MICU3 subfamily. Heterodimer; disulfide-linked; heterodimerizes with MICU1. Component of the uniplex complex, composed of MCU, EMRE/SMDT1, MICU1 and MICU3 in a 4:4:1:1 stoichiometry. In terms of tissue distribution, specifically expressed in the central nervous system and skeletal muscle.

It is found in the mitochondrion intermembrane space. Its subcellular location is the mitochondrion inner membrane. In terms of biological role, tissue-specific calcium sensor of the mitochondrial calcium uniporter (MCU) channel, which specifically regulates MCU channel activity in the central nervous system and skeletal muscle. Senses calcium level via its EF-hand domains: compared to MICU1 and MICU2, MICU3 has a higher affinity for calcium. MICU1 and MICU3 form a disulfide-linked heterodimer that stimulates and inhibits MCU activity, depending on the concentration of calcium. At low calcium levels, MICU1 occludes the pore of the MCU channel, preventing mitochondrial calcium uptake. At higher calcium levels, calcium-binding to MICU1 and MICU3 induces a conformational change that weakens MCU-MICU1 interactions and moves the MICU1-MICU3 heterodimer away from the pore, allowing calcium permeation through the MCU channel. The high calcium affinity of MICU3 lowers the calcium threshold necessary for calcium permeation through the MCU channel. The MICU1-MICU3 heterodimer promotes flexibility of neurotransmission in neuronal cells by enhancing mitochondrial calcium uptake in presynapses. It is also required to increase mitochondrial calcium uptake in skeletal muscle cells, thereby increasing ATP production. The chain is Calcium uptake protein 3, mitochondrial from Homo sapiens (Human).